The primary structure comprises 285 residues: Chalcone synthase 6-4 (285 aa).

The active site involves Cys60.

The protein belongs to the thiolase-like superfamily. Chalcone/stilbene synthases family.

The enzyme catalyses (E)-4-coumaroyl-CoA + 3 malonyl-CoA + 3 H(+) = 2',4,4',6'-tetrahydroxychalcone + 3 CO2 + 4 CoA. It participates in secondary metabolite biosynthesis; flavonoid biosynthesis. Its function is as follows. The primary product of this enzyme is 4,2',4',6'-tetrahydroxychalcone (also termed naringenin-chalcone or chalcone) which can under specific conditions spontaneously isomerize into naringenin. This is Chalcone synthase 6-4 (CHS6-4) from Medicago sativa (Alfalfa).